We begin with the raw amino-acid sequence, 191 residues long: UPF0669 protein C6orf120 homolog (191 aa).

The N-terminal stretch at 1 to 30 (MAAPRGRAAPWTTALLLLLTSQILSPGSCA) is a signal peptide. Asn-53 carries an N-linked (GlcNAc...) asparagine glycan.

Belongs to the UPF0669 family.

The protein resides in the secreted. In terms of biological role, may be involved in induction of apoptosis in CD4(+) T-cells, but not CD8(+) T-cells or hepatocytes. This Macaca fascicularis (Crab-eating macaque) protein is UPF0669 protein C6orf120 homolog.